The chain runs to 321 residues: Lipoyl synthase (321 aa).

Residues cysteine 68, cysteine 73, cysteine 79, cysteine 94, cysteine 98, cysteine 101, and serine 308 each coordinate [4Fe-4S] cluster. One can recognise a Radical SAM core domain in the interval 80–297; that stretch reads FNHGTATFMI…KEIALELGFT (218 aa).

This sequence belongs to the radical SAM superfamily. Lipoyl synthase family. Requires [4Fe-4S] cluster as cofactor.

Its subcellular location is the cytoplasm. The enzyme catalyses [[Fe-S] cluster scaffold protein carrying a second [4Fe-4S](2+) cluster] + N(6)-octanoyl-L-lysyl-[protein] + 2 oxidized [2Fe-2S]-[ferredoxin] + 2 S-adenosyl-L-methionine + 4 H(+) = [[Fe-S] cluster scaffold protein] + N(6)-[(R)-dihydrolipoyl]-L-lysyl-[protein] + 4 Fe(3+) + 2 hydrogen sulfide + 2 5'-deoxyadenosine + 2 L-methionine + 2 reduced [2Fe-2S]-[ferredoxin]. Its pathway is protein modification; protein lipoylation via endogenous pathway; protein N(6)-(lipoyl)lysine from octanoyl-[acyl-carrier-protein]: step 2/2. Catalyzes the radical-mediated insertion of two sulfur atoms into the C-6 and C-8 positions of the octanoyl moiety bound to the lipoyl domains of lipoate-dependent enzymes, thereby converting the octanoylated domains into lipoylated derivatives. This is Lipoyl synthase from Vibrio atlanticus (strain LGP32) (Vibrio splendidus (strain Mel32)).